We begin with the raw amino-acid sequence, 343 residues long: Putative KilA-N domain-containing protein R904 (343 aa).

Residues glutamate 51–tyrosine 157 form the KilA-N domain. Residues alanine 159 to tyrosine 279 are a coiled coil.

The protein is Putative KilA-N domain-containing protein R904 of Acanthamoeba polyphaga mimivirus (APMV).